The primary structure comprises 169 residues: 6,7-dimethyl-8-ribityllumazine synthase (169 aa).

Residues Phe-24, 58–60 (ALE), and 82–84 (AVI) each bind 5-amino-6-(D-ribitylamino)uracil. A (2S)-2-hydroxy-3-oxobutyl phosphate-binding site is contributed by 87 to 88 (ET). The active-site Proton donor is the His-90. Asn-115 provides a ligand contact to 5-amino-6-(D-ribitylamino)uracil. Position 129 (Arg-129) interacts with (2S)-2-hydroxy-3-oxobutyl phosphate.

This sequence belongs to the DMRL synthase family.

The enzyme catalyses (2S)-2-hydroxy-3-oxobutyl phosphate + 5-amino-6-(D-ribitylamino)uracil = 6,7-dimethyl-8-(1-D-ribityl)lumazine + phosphate + 2 H2O + H(+). It functions in the pathway cofactor biosynthesis; riboflavin biosynthesis; riboflavin from 2-hydroxy-3-oxobutyl phosphate and 5-amino-6-(D-ribitylamino)uracil: step 1/2. Functionally, catalyzes the formation of 6,7-dimethyl-8-ribityllumazine by condensation of 5-amino-6-(D-ribitylamino)uracil with 3,4-dihydroxy-2-butanone 4-phosphate. This is the penultimate step in the biosynthesis of riboflavin. The polypeptide is 6,7-dimethyl-8-ribityllumazine synthase (Burkholderia vietnamiensis (strain G4 / LMG 22486) (Burkholderia cepacia (strain R1808))).